A 295-amino-acid polypeptide reads, in one-letter code: Ribosomal protein L11 methyltransferase (295 aa).

Positions 145, 166, 188, and 230 each coordinate S-adenosyl-L-methionine.

This sequence belongs to the methyltransferase superfamily. PrmA family.

It is found in the cytoplasm. The enzyme catalyses L-lysyl-[protein] + 3 S-adenosyl-L-methionine = N(6),N(6),N(6)-trimethyl-L-lysyl-[protein] + 3 S-adenosyl-L-homocysteine + 3 H(+). Methylates ribosomal protein L11. In Haemophilus influenzae (strain PittEE), this protein is Ribosomal protein L11 methyltransferase.